A 908-amino-acid polypeptide reads, in one-letter code: Protein translocase subunit SecA (908 aa).

Residues Q87, 105–109 (GEGKT), and D494 each bind ATP. The disordered stretch occupies residues 871-908 (QEFSGGNLNRSQSNGSSVTVTTSSGGGTERKTSRRRKR). Residues 874–884 (SGGNLNRSQSN) are compositionally biased toward polar residues.

It belongs to the SecA family. Monomer and homodimer. Part of the essential Sec protein translocation apparatus which comprises SecA, SecYEG and auxiliary proteins SecDF. Other proteins may also be involved.

Its subcellular location is the cell inner membrane. It is found in the cytoplasm. The enzyme catalyses ATP + H2O + cellular proteinSide 1 = ADP + phosphate + cellular proteinSide 2.. Its function is as follows. Part of the Sec protein translocase complex. Interacts with the SecYEG preprotein conducting channel. Has a central role in coupling the hydrolysis of ATP to the transfer of proteins into and across the cell membrane, serving as an ATP-driven molecular motor driving the stepwise translocation of polypeptide chains across the membrane. This Leptospira interrogans serogroup Icterohaemorrhagiae serovar Lai (strain 56601) protein is Protein translocase subunit SecA.